The following is a 382-amino-acid chain: D-galactonate dehydratase (382 aa).

Residue Asp183 coordinates Mg(2+). His185 serves as the catalytic Proton donor. Mg(2+) is bound by residues Glu209 and Glu235. Residue His285 is the Proton acceptor of the active site.

It belongs to the mandelate racemase/muconate lactonizing enzyme family. GalD subfamily. The cofactor is Mg(2+).

The enzyme catalyses D-galactonate = 2-dehydro-3-deoxy-D-galactonate + H2O. It participates in carbohydrate acid metabolism; D-galactonate degradation; D-glyceraldehyde 3-phosphate and pyruvate from D-galactonate: step 1/3. In terms of biological role, catalyzes the dehydration of D-galactonate to 2-keto-3-deoxy-D-galactonate. The sequence is that of D-galactonate dehydratase from Ralstonia pickettii (strain 12J).